We begin with the raw amino-acid sequence, 210 residues long: 7-methyl-GTP pyrophosphatase (210 aa).

D79 acts as the Proton acceptor in catalysis.

Belongs to the Maf family. YceF subfamily. Requires a divalent metal cation as cofactor.

It is found in the cytoplasm. It catalyses the reaction N(7)-methyl-GTP + H2O = N(7)-methyl-GMP + diphosphate + H(+). Functionally, nucleoside triphosphate pyrophosphatase that hydrolyzes 7-methyl-GTP (m(7)GTP). May have a dual role in cell division arrest and in preventing the incorporation of modified nucleotides into cellular nucleic acids. In Burkholderia orbicola (strain AU 1054), this protein is 7-methyl-GTP pyrophosphatase.